A 182-amino-acid chain; its full sequence is Large ribosomal subunit protein bL25 (182 aa).

The protein belongs to the bacterial ribosomal protein bL25 family. CTC subfamily. In terms of assembly, part of the 50S ribosomal subunit; part of the 5S rRNA/L5/L18/L25 subcomplex. Contacts the 5S rRNA. Binds to the 5S rRNA independently of L5 and L18.

Its function is as follows. This is one of the proteins that binds to the 5S RNA in the ribosome where it forms part of the central protuberance. The sequence is that of Large ribosomal subunit protein bL25 from Borrelia duttonii (strain Ly).